The chain runs to 322 residues: Peptidase 1 (322 aa).

Residues 1-18 (MKFVLAIASLLVLSVVYA) form the signal peptide. Residues 19 to 99 (YPSEIRTFEE…LKKEFDLDAG (81 aa)) constitute a propeptide that is removed on maturation. The cysteines at positions 131 and 171 are disulfide-linked. Residue C134 is part of the active site. N152 carries an N-linked (GlcNAc...) asparagine glycan. Active-site residues include H270 and N290.

The protein belongs to the peptidase C1 family. Expressed in the gut.

Its subcellular location is the secreted. The catalysed reaction is Broad endopeptidase specificity.. Probable thiol protease. This chain is Peptidase 1, found in Psoroptes ovis (Sheep scab mite).